We begin with the raw amino-acid sequence, 297 residues long: Homoserine kinase (297 aa).

Residue 82–92 (PVSRGLGSSAA) participates in ATP binding.

This sequence belongs to the GHMP kinase family. Homoserine kinase subfamily.

Its subcellular location is the cytoplasm. It carries out the reaction L-homoserine + ATP = O-phospho-L-homoserine + ADP + H(+). It functions in the pathway amino-acid biosynthesis; L-threonine biosynthesis; L-threonine from L-aspartate: step 4/5. Catalyzes the ATP-dependent phosphorylation of L-homoserine to L-homoserine phosphate. The protein is Homoserine kinase of Clostridium botulinum (strain Okra / Type B1).